A 206-amino-acid chain; its full sequence is LOB domain-containing protein 35 (206 aa).

In terms of domain architecture, LOB spans 4-105 (TCCSACKVMK…EQINSAKNEL (102 aa)). The interval 184 to 206 (ASTSGGTSATQKTLPFPQNHNQP) is disordered.

This sequence belongs to the LOB domain-containing protein family.

The protein is LOB domain-containing protein 35 (LBD35) of Arabidopsis thaliana (Mouse-ear cress).